We begin with the raw amino-acid sequence, 364 residues long: Dihydroorotate dehydrogenase (quinone) (364 aa).

FMN-binding positions include Ala61–Lys65 and Ser85. Position 65 (Lys65) interacts with substrate. Asn110 to Phe114 contacts substrate. FMN contacts are provided by Asn139 and Asn170. Asn170 lines the substrate pocket. Ser173 acts as the Nucleophile in catalysis. A substrate-binding site is contributed by Asn175. FMN-binding residues include Lys214 and Ser242. Asn243–Thr244 is a substrate binding site. FMN-binding positions include Gly266, Gly295, and Tyr316–Ser317.

This sequence belongs to the dihydroorotate dehydrogenase family. Type 2 subfamily. Monomer. It depends on FMN as a cofactor.

The protein resides in the cell membrane. It catalyses the reaction (S)-dihydroorotate + a quinone = orotate + a quinol. It functions in the pathway pyrimidine metabolism; UMP biosynthesis via de novo pathway; orotate from (S)-dihydroorotate (quinone route): step 1/1. Functionally, catalyzes the conversion of dihydroorotate to orotate with quinone as electron acceptor. This chain is Dihydroorotate dehydrogenase (quinone), found in Bradyrhizobium sp. (strain ORS 278).